We begin with the raw amino-acid sequence, 422 residues long: Phospholipase D Z (422 aa).

The N-terminal stretch at 1–18 (MMMKLLFLIALFGCVVNS) is a signal peptide. Residue asparagine 53 is glycosylated (N-linked (GlcNAc...) asparagine). Residues 148–175 (GAGILHTKVIVVDQVSAYLGSANLDWRS) form the PLD phosphodiesterase 1 domain. Residues histidine 153, lysine 155, and aspartate 160 contribute to the active site. Asparagine 225 and asparagine 320 each carry an N-linked (GlcNAc...) asparagine glycan. One can recognise a PLD phosphodiesterase 2 domain in the interval 357–383 (FTRVNHAKYMVTDEQSYVGTSNWSEDY). Catalysis depends on residues histidine 362, lysine 364, and aspartate 369. Asparagine 378 carries an N-linked (GlcNAc...) asparagine glycan.

This sequence belongs to the phospholipase D family.

It carries out the reaction a 1,2-diacyl-sn-glycero-3-phosphocholine + H2O = a 1,2-diacyl-sn-glycero-3-phosphate + choline + H(+). Its activity is regulated as follows. Inhibited by butan-1-ol. Functionally, hydrolyzes membrane phospholipids, such as PtdCho (phosphatidylcholine), producing the free headgroup and PtdOH (phosphatidic acid; signaling molecule on its own). This chain is Phospholipase D Z (pldZ), found in Dictyostelium discoideum (Social amoeba).